Here is a 210-residue protein sequence, read N- to C-terminus: Thymidylate kinase (210 aa).

Gly13–Ser20 contributes to the ATP binding site.

The protein belongs to the thymidylate kinase family.

It carries out the reaction dTMP + ATP = dTDP + ADP. Functionally, phosphorylation of dTMP to form dTDP in both de novo and salvage pathways of dTTP synthesis. The sequence is that of Thymidylate kinase from Shewanella loihica (strain ATCC BAA-1088 / PV-4).